The chain runs to 295 residues: 4-diphosphocytidyl-2-C-methyl-D-erythritol kinase (295 aa).

K18 is an active-site residue. 101 to 111 serves as a coordination point for ATP; sequence PMGGGIGGGSS. The active site involves D143.

Belongs to the GHMP kinase family. IspE subfamily.

It carries out the reaction 4-CDP-2-C-methyl-D-erythritol + ATP = 4-CDP-2-C-methyl-D-erythritol 2-phosphate + ADP + H(+). It functions in the pathway isoprenoid biosynthesis; isopentenyl diphosphate biosynthesis via DXP pathway; isopentenyl diphosphate from 1-deoxy-D-xylulose 5-phosphate: step 3/6. Its function is as follows. Catalyzes the phosphorylation of the position 2 hydroxy group of 4-diphosphocytidyl-2C-methyl-D-erythritol. This is 4-diphosphocytidyl-2-C-methyl-D-erythritol kinase from Vibrio vulnificus (strain YJ016).